Consider the following 594-residue polypeptide: Isocitrate dehydrogenase kinase/phosphatase (594 aa).

Residues 315 to 321 (APGIRGM) and K336 contribute to the ATP site. D371 is a catalytic residue.

Belongs to the AceK family.

It localises to the cytoplasm. It carries out the reaction L-seryl-[isocitrate dehydrogenase] + ATP = O-phospho-L-seryl-[isocitrate dehydrogenase] + ADP + H(+). Its function is as follows. Bifunctional enzyme which can phosphorylate or dephosphorylate isocitrate dehydrogenase (IDH) on a specific serine residue. This is a regulatory mechanism which enables bacteria to bypass the Krebs cycle via the glyoxylate shunt in response to the source of carbon. When bacteria are grown on glucose, IDH is fully active and unphosphorylated, but when grown on acetate or ethanol, the activity of IDH declines drastically concomitant with its phosphorylation. This Klebsiella pneumoniae subsp. pneumoniae (strain ATCC 700721 / MGH 78578) protein is Isocitrate dehydrogenase kinase/phosphatase.